Here is a 194-residue protein sequence, read N- to C-terminus: Orotate phosphoribosyltransferase (194 aa).

5-phospho-alpha-D-ribose 1-diphosphate contacts are provided by residues arginine 102, lysine 103, lysine 106, histidine 108, and 129-137 (EDVVTTGGS). Orotate-binding residues include threonine 133 and arginine 161.

Belongs to the purine/pyrimidine phosphoribosyltransferase family. PyrE subfamily. Homodimer. Mg(2+) is required as a cofactor.

The enzyme catalyses orotidine 5'-phosphate + diphosphate = orotate + 5-phospho-alpha-D-ribose 1-diphosphate. The protein operates within pyrimidine metabolism; UMP biosynthesis via de novo pathway; UMP from orotate: step 1/2. Functionally, catalyzes the transfer of a ribosyl phosphate group from 5-phosphoribose 1-diphosphate to orotate, leading to the formation of orotidine monophosphate (OMP). The polypeptide is Orotate phosphoribosyltransferase (Prochlorococcus marinus (strain MIT 9211)).